Reading from the N-terminus, the 395-residue chain is General transcription factor IIH subunit 2-like protein (395 aa).

The 177-residue stretch at 60 to 236 folds into the VWFA domain; it reads HLYVVVDGSR…HYKELLTHHL (177 aa). Residue Tyr-95 is modified to Phosphotyrosine. The C4-type zinc-finger motif lies at 291-308; that stretch reads CPQCRAKYCELPVECKIC.

Belongs to the GTF2H2 family.

It is found in the nucleus. Its function is as follows. Component of the core-TFIIH basal transcription factor involved in nucleotide excision repair (NER) of DNA and, when complexed to CAK, in RNA transcription by RNA polymerase II. This chain is General transcription factor IIH subunit 2-like protein (GTF2H2C), found in Homo sapiens (Human).